The primary structure comprises 355 residues: WAT1-related protein At1g25270 (355 aa).

Helical transmembrane passes span V4 to T24, V33 to F53, L65 to L85, T94 to F114, L134 to W154, V175 to L195, L207 to L227, L244 to W264, L272 to A292, and L297 to W317. An EamA 1 domain is found at F12–V142. The EamA 2 domain occupies N210 to V316.

Belongs to the drug/metabolite transporter (DMT) superfamily. Plant drug/metabolite exporter (P-DME) (TC 2.A.7.4) family.

The protein resides in the membrane. The sequence is that of WAT1-related protein At1g25270 from Arabidopsis thaliana (Mouse-ear cress).